A 174-amino-acid chain; its full sequence is Imidazole glycerol phosphate synthase subunit HisH (174 aa).

Residues Ser2–Arg174 enclose the Glutamine amidotransferase type-1 domain. Cys77 serves as the catalytic Nucleophile.

Heterodimer of HisH and HisF.

The protein resides in the cytoplasm. It catalyses the reaction 5-[(5-phospho-1-deoxy-D-ribulos-1-ylimino)methylamino]-1-(5-phospho-beta-D-ribosyl)imidazole-4-carboxamide + L-glutamine = D-erythro-1-(imidazol-4-yl)glycerol 3-phosphate + 5-amino-1-(5-phospho-beta-D-ribosyl)imidazole-4-carboxamide + L-glutamate + H(+). The enzyme catalyses L-glutamine + H2O = L-glutamate + NH4(+). Its pathway is amino-acid biosynthesis; L-histidine biosynthesis; L-histidine from 5-phospho-alpha-D-ribose 1-diphosphate: step 5/9. IGPS catalyzes the conversion of PRFAR and glutamine to IGP, AICAR and glutamate. The HisH subunit catalyzes the hydrolysis of glutamine to glutamate and ammonia as part of the synthesis of IGP and AICAR. The resulting ammonia molecule is channeled to the active site of HisF. The sequence is that of Imidazole glycerol phosphate synthase subunit HisH (hisH) from Buchnera aphidicola subsp. Schlechtendalia chinensis.